The chain runs to 261 residues: Cytochrome c oxidase subunit 3 (261 aa).

The Mitochondrial matrix portion of the chain corresponds to Met1–Pro15. The chain crosses the membrane as a helical span at residues Trp16–Trp34. Topologically, residues Phe35–Thr40 are mitochondrial intermembrane. Residues Ile41–Thr66 traverse the membrane as a helical segment. Residues Phe67–Thr72 are Mitochondrial matrix-facing. Residues Pro73–Ser105 traverse the membrane as a helical segment. The Mitochondrial intermembrane portion of the chain corresponds to Leu106–Glu128. A helical transmembrane segment spans residues Val129 to Met152. The Mitochondrial matrix portion of the chain corresponds to Glu153–His155. Residues Arg156–Glu183 form a helical membrane-spanning segment. Residues Ala184 to Asp190 lie on the Mitochondrial intermembrane side of the membrane. Residues Gly191–Leu223 form a helical membrane-spanning segment. Residues Lys224–His232 are Mitochondrial matrix-facing. Residues Phe233 to Ile256 form a helical membrane-spanning segment. At Tyr257 to Ser261 the chain is on the mitochondrial intermembrane side.

This sequence belongs to the cytochrome c oxidase subunit 3 family. As to quaternary structure, component of the cytochrome c oxidase (complex IV, CIV), a multisubunit enzyme composed of 14 subunits. The complex is composed of a catalytic core of 3 subunits MT-CO1, MT-CO2 and MT-CO3, encoded in the mitochondrial DNA, and 11 supernumerary subunits COX4I, COX5A, COX5B, COX6A, COX6B, COX6C, COX7A, COX7B, COX7C, COX8 and NDUFA4, which are encoded in the nuclear genome. The complex exists as a monomer or a dimer and forms supercomplexes (SCs) in the inner mitochondrial membrane with NADH-ubiquinone oxidoreductase (complex I, CI) and ubiquinol-cytochrome c oxidoreductase (cytochrome b-c1 complex, complex III, CIII), resulting in different assemblies (supercomplex SCI(1)III(2)IV(1) and megacomplex MCI(2)III(2)IV(2)).

It is found in the mitochondrion inner membrane. The catalysed reaction is 4 Fe(II)-[cytochrome c] + O2 + 8 H(+)(in) = 4 Fe(III)-[cytochrome c] + 2 H2O + 4 H(+)(out). In terms of biological role, component of the cytochrome c oxidase, the last enzyme in the mitochondrial electron transport chain which drives oxidative phosphorylation. The respiratory chain contains 3 multisubunit complexes succinate dehydrogenase (complex II, CII), ubiquinol-cytochrome c oxidoreductase (cytochrome b-c1 complex, complex III, CIII) and cytochrome c oxidase (complex IV, CIV), that cooperate to transfer electrons derived from NADH and succinate to molecular oxygen, creating an electrochemical gradient over the inner membrane that drives transmembrane transport and the ATP synthase. Cytochrome c oxidase is the component of the respiratory chain that catalyzes the reduction of oxygen to water. Electrons originating from reduced cytochrome c in the intermembrane space (IMS) are transferred via the dinuclear copper A center (CU(A)) of subunit 2 and heme A of subunit 1 to the active site in subunit 1, a binuclear center (BNC) formed by heme A3 and copper B (CU(B)). The BNC reduces molecular oxygen to 2 water molecules using 4 electrons from cytochrome c in the IMS and 4 protons from the mitochondrial matrix. This Tragelaphus strepsiceros (Greater kudu) protein is Cytochrome c oxidase subunit 3 (MT-CO3).